Here is a 780-residue protein sequence, read N- to C-terminus: Cullin-5 (780 aa).

Ser-34 bears the Phosphoserine mark. A Phosphothreonine modification is found at Thr-210. The Cullin neddylation domain occupies 711 to 772; that stretch reads RILRTQEAII…HKYIRRDESD (62 aa). Lys-724 is covalently cross-linked (Glycyl lysine isopeptide (Lys-Gly) (interchain with G-Cter in NEDD8)).

It belongs to the cullin family. In terms of assembly, component of multiple cullin-5-RING E3 ubiquitin-protein ligase complexes (ECS complexes, also named CRL5 complexes) formed of CUL5, Elongin BC (ELOB and ELOC), RNF7/RBX2 and a variable SOCS box domain-containing protein as substrate-specific recognition component. CUL5-containing ECS complexes specifically contain RNF7/RBX2, and not RBX1, as catalytic subunit. Component of the ECS(ASB2) complex with the substrate recognition component ASB2. Component of the ECS(ASB6) complex with the substrate recognition component ASB6. Component of the ECS(ASB7) complex with the substrate recognition component ASB7. Component of the ECS(ASB9) complex with the substrate recognition component ASB9. Component of the ECS(ASB11) complex with the substrate recognition component ASB11. Component of the ECS(ASB12) complex with the substrate recognition component ASB12. Component of the ECS(LRRC41) complex with the substrate recognition component LRRC41. Component of the ECS(SOCS1) complex with the substrate recognition component SOCS1. Component of the ECS(SOCS2) complex with the substrate recognition component SOCS2. Component of the ECS(WSB1) complex with the substrate recognition subunit WSB1. Component of the ECS(SOCS3) complex with the substrate recognition component SOCS3. Component of the ECS(SOCS7) complex with the substrate recognition component SOCS7. Component of the ECS(SPSB1) complex with the substrate recognition component SPSB1. Component of the ECS(SPSB3) complex with the substrate recognition component SPSB3. Component of the ECS(SPSB2) complex with the substrate recognition component SPSB2. Component of the ECS(SPSB4) complex with the substrate recognition component SPSB4. Component of the ECS(RAB40) complex with the substrate recognition subunit RAB40A, RAB40B or RAB40C. Component of the ECS(KLHDC1) complex with the substrate recognition component KLHDC1. Component of the ECS(PCMTD1) complex with the substrate recognition subunit PCMTD1. May also form complexes containing RBX1 and ELOA or VHL; additional evidence is however required to confirm this result in vivo. Interacts (when neddylated) with ARIH2; leading to activate the E3 ligase activity of ARIH2. Interacts with ERCC6; the interaction is induced by DNA damaging agents or inhibitors of RNA polymerase II elongation. Interacts with ELOA (via the BC-box). Interacts (unneddylated form) with DCUN1D1, DCUN1D2, DCUN1D3, DCUN1D4 and DCUN1D5; these interactions promote the cullin neddylation. (Microbial infection) Interacts (via the substrate recognition component) with HIV-1 Vif; forming an active cullin-5-RING E3 ubiquitin-protein ligase complex (ECS complex). As to quaternary structure, (Microbial infection) Interacts (via the substrate recognition component) with human adenovirus 5 proteins E1B-55K and E4-orf6. In terms of assembly, (Microbial infection) Interacts with herpes virus 8 protein LANA1; this interaction promotes the degradation of NF-kappa-B component RELA. (Microbial infection) Interacts with molluscum contagiosum virus protein MC132; this interaction promotes the degradation of NF-kappa-B component RELA. Post-translationally, neddylated; which enhances the ubiquitination activity of ECS complexes and prevents binding of the inhibitor CAND1. Deneddylated via its interaction with the COP9 signalosome (CSN).

The protein localises to the nucleus. The protein operates within protein modification; protein ubiquitination. Its function is as follows. Core component of multiple cullin-5-RING E3 ubiquitin-protein ligase complexes (ECS complexes, also named CRL5 complexes), which mediate the ubiquitination and subsequent proteasomal degradation of target proteins. Acts a scaffold protein that contributes to catalysis through positioning of the substrate and the ubiquitin-conjugating enzyme. The functional specificity of the E3 ubiquitin-protein ligase complex depends on the variable SOCS box-containing substrate recognition component. Acts as a key regulator of neuron positioning during cortex development: component of various SOCS-containing ECS complexes, such as the ECS(SOCS7) complex, that regulate reelin signaling by mediating ubiquitination and degradation of DAB1. ECS(SOCS1) seems to direct ubiquitination of JAK2. The ECS(SOCS2) complex mediates the ubiquitination and subsequent proteasomal degradation of phosphorylated EPOR and GHR. The ECS(SPSB3) complex catalyzes ubiquitination of nuclear CGAS. ECS(KLHDC1) complex is part of the DesCEND (destruction via C-end degrons) pathway and mediates ubiquitination and degradation of truncated SELENOS selenoprotein produced by failed UGA/Sec decoding, which ends with a glycine. The ECS(ASB9) complex mediates ubiquitination and degradation of CKB. As part of some ECS complex, promotes 'Lys-11'-linked ubiquitination and degradation of BTRC. As part of a multisubunit ECS complex, polyubiquitinates monoubiquitinated POLR2A. As part of the ECS(RAB40C) complex, mediates ANKRD28 ubiquitination and degradation, thereby inhibiting protein phosphatase 6 (PP6) complex activity and focal adhesion assembly during cell migration. As part of the ECS(RAB40A) complex, mediates RHOU 'Lys-48'-linked ubiquitination and degradation, thus inhibiting focal adhesion disassembly during cell migration. As part of the ECS(RAB40B) complex, mediates LIMA1/EPLIN and RAP2 ubiquitination, thereby regulating actin cytoskeleton dynamics and stress fiber formation during cell migration. May form a cell surface vasopressin receptor. In terms of biological role, (Microbial infection) Following infection by HIV-1 virus, CUL5 associates with HIV-1 Vif proteins and forms a cullin-5-RING E3 ubiquitin-protein ligase complex (ECS complex) that catalyzes ubiquitination and degradation of APOBEC3F and APOBEC3G. The complex can also ubiquitinate APOBEC3H to some extent. (Microbial infection) Seems to be involved in proteasomal degradation of p53/TP53 stimulated by adenovirus E1B-55 kDa protein. The polypeptide is Cullin-5 (Homo sapiens (Human)).